Reading from the N-terminus, the 194-residue chain is Adenylate kinase isoenzyme 1 (194 aa).

Position 1 is an N-acetylmethionine (M1). 18-23 contributes to the ATP binding site; it reads GSGKGT. The residue at position 38 (S38) is a Phosphoserine. The tract at residues 38–67 is NMP; sequence STGDLLRSEVSSGSARGKKLSEIMEKGQLV. AMP-binding positions include T39, R44, 65–67, 94–97, and Q101; these read QLV and GYPR. Residues 131–141 are LID; sequence KRGETSGRVDD. ATP is bound at residue R132. Residues R138 and R149 each contribute to the AMP site. G177 contributes to the ATP binding site.

Belongs to the adenylate kinase family. AK1 subfamily. Monomer. Mg(2+) serves as cofactor.

Its subcellular location is the cytoplasm. It catalyses the reaction a ribonucleoside 5'-phosphate + ATP = a ribonucleoside 5'-diphosphate + ADP. The catalysed reaction is AMP + ATP = 2 ADP. The enzyme catalyses dAMP + ATP = dADP + ADP. It carries out the reaction dATP + AMP = dADP + ADP. It catalyses the reaction dAMP + dATP = 2 dADP. The catalysed reaction is a 2'-deoxyribonucleoside 5'-diphosphate + ATP = a 2'-deoxyribonucleoside 5'-triphosphate + ADP. The enzyme catalyses a ribonucleoside 5'-diphosphate + ATP = a ribonucleoside 5'-triphosphate + ADP. It carries out the reaction CDP + GTP = CTP + GDP. It catalyses the reaction GDP + ATP = GTP + ADP. The catalysed reaction is UDP + ATP = UTP + ADP. The enzyme catalyses GTP + UDP = UTP + GDP. It carries out the reaction dTDP + GTP = dTTP + GDP. It catalyses the reaction dCDP + GTP = dCTP + GDP. The catalysed reaction is dGDP + ATP = dGTP + ADP. The enzyme catalyses dADP + GTP = dATP + GDP. It carries out the reaction thiamine diphosphate + ADP = thiamine triphosphate + AMP. Its function is as follows. Catalyzes the reversible transfer of the terminal phosphate group between ATP and AMP. Also displays broad nucleoside diphosphate kinase activity. Plays an important role in cellular energy homeostasis and in adenine nucleotide metabolism. Also catalyzes at a very low rate the synthesis of thiamine triphosphate (ThTP) from thiamine diphosphate (ThDP) and ADP. The protein is Adenylate kinase isoenzyme 1 of Homo sapiens (Human).